The following is a 1887-amino-acid chain: Bifunctional serine/threonine-protein kinase/NEDD4-like E3 ubiquitin-protein ligase (1887 aa).

Disordered stretches follow at residues 19–55 (TPQV…TTNF) and 72–98 (TDNY…TKEN). 2 stretches are compositionally biased toward low complexity: residues 26 to 54 (NNSN…STTN) and 72 to 97 (TDNY…NTKE). RCC1 repeat units lie at residues 206–260 (QGNL…ALTI), 262–314 (GKVY…NNNN), 356–409 (KGLL…VLTN), 411–470 (GLVF…AISD), 472–528 (NDTY…AMSI), and 529–581 (DGSL…IVEK). The disordered stretch occupies residues 299–333 (NNNNNNNNNNSTNNNNNNNNDGAQQQFSLSQNSSS). 3 disordered regions span residues 594-619 (LPSS…SDSN), 823-858 (VLVH…KNGT), and 1030-1088 (DDDN…NNNN). Residues 825–839 (VHQDEKQQQREKSET) are compositionally biased toward basic and acidic residues. Over residues 840–852 (ELEEEQDEEEEDS) the composition is skewed to acidic residues. The span at 1036–1088 (ENNSVNNNSNNNNNNNNNNNNNNNNNNNNNNNIDNNINSNSINDSSNNNNNNN) shows a compositional bias: low complexity. The Protein kinase domain maps to 1158–1437 (YDIIKTLSTH…AHQIAVHPYF (280 aa)). Residues 1164–1172 (LSTHPHNVY) and K1184 contribute to the ATP site. D1281 serves as the catalytic Proton acceptor. An HECT domain is found at 1501–1887 (ESNKLFCRLE…LEYVDGFAFI (387 aa)). The disordered stretch occupies residues 1586 to 1628 (NNNNNNEENNNNNNNNNNNNNNNNNNNNNNNNNNNNNNNNNEE). The active-site Glycyl thioester intermediate is C1855.

This sequence in the N-terminal section; belongs to the protein kinase superfamily. Ser/Thr protein kinase family. It in the C-terminal section; belongs to the protein kinase superfamily. CAMK Ser/Thr protein kinase family.

The enzyme catalyses L-seryl-[protein] + ATP = O-phospho-L-seryl-[protein] + ADP + H(+). It carries out the reaction L-threonyl-[protein] + ATP = O-phospho-L-threonyl-[protein] + ADP + H(+). It catalyses the reaction S-ubiquitinyl-[E2 ubiquitin-conjugating enzyme]-L-cysteine + [acceptor protein]-L-lysine = [E2 ubiquitin-conjugating enzyme]-L-cysteine + N(6)-ubiquitinyl-[acceptor protein]-L-lysine.. It participates in protein modification; protein ubiquitination. The sequence is that of Bifunctional serine/threonine-protein kinase/NEDD4-like E3 ubiquitin-protein ligase from Dictyostelium discoideum (Social amoeba).